Here is a 303-residue protein sequence, read N- to C-terminus: Protein SULFUR DEFICIENCY-INDUCED 2 (303 aa).

The stretch at 62-89 (RVDSALKDMALLMKQQNRAEEAIDAIQS) forms a coiled coil. 4 TPR repeats span residues 64-97 (DSALKDMALLMKQQNRAEEAIDAIQSFRDLCSRQ), 100-133 (ESLDNVLIDLYKKCGRIEEQVELLKQKLWMIYQG), 160-193 (SRILGNLGWAYMQLMDYTAAEAVYRKAQLIEPDA), and 195-226 (KACNLCTCLIKQGKHDEARSILFRDVLMENKE). The stretch at 232 to 253 (RLMARVQELLSELKPQEEEAAA) forms a coiled coil.

This sequence belongs to the MS5 protein family.

It is found in the nucleus. Involved in the utilization of stored sulfate under sulfur-deficient conditions. The polypeptide is Protein SULFUR DEFICIENCY-INDUCED 2 (Arabidopsis thaliana (Mouse-ear cress)).